The primary structure comprises 248 residues: Probable transcriptional regulatory protein RPE_4771 (248 aa).

The interval 1–21 (MAGHSQFKNIMHRKGRQDAQK) is disordered.

The protein belongs to the TACO1 family.

It localises to the cytoplasm. This is Probable transcriptional regulatory protein RPE_4771 from Rhodopseudomonas palustris (strain BisA53).